The primary structure comprises 442 residues: UDP-glucosyltransferase 29 (442 aa).

H20 acts as the Proton acceptor in catalysis. H20 is an an anthocyanidin binding site. D116 (charge relay) is an active-site residue. Positions 138, 318, 320, 335, 338, 340, 343, 359, and 360 each coordinate UDP-alpha-D-glucose.

This sequence belongs to the UDP-glycosyltransferase family. As to expression, expressed at higher levels in roots than in leaves.

The enzyme catalyses (20S)-ginsenoside F2 + UDP-alpha-D-glucose = (20S)-ginsenoside Rd + UDP + H(+). The catalysed reaction is (20S)-ginsenoside Rh2 + UDP-alpha-D-glucose = (20S)-ginsenoside Rg3 + UDP + H(+). Its pathway is secondary metabolite biosynthesis; terpenoid biosynthesis. In terms of biological role, component of the dammarane-type triterpene saponins (e.g. PPD-type ginsenosides or panaxosides) biosynthetic pathway. Glycosyltransferase that catalyzes the conversion of ginsenoside Rh2 to ginsenoside Rg3. Triggers the biosynthesis of ginsenoside Rd from ginsenoside F2. This chain is UDP-glucosyltransferase 29, found in Panax ginseng (Korean ginseng).